The chain runs to 296 residues: uncharacterized protein (296 aa).

Residues 1 to 20 form the signal peptide; the sequence is MKKALGILAILLILVGGYFA.

This is an uncharacterized protein from Aquifex aeolicus (strain VF5).